A 272-amino-acid polypeptide reads, in one-letter code: Indole-3-glycerol phosphate synthase (272 aa).

This sequence belongs to the TrpC family.

The catalysed reaction is 1-(2-carboxyphenylamino)-1-deoxy-D-ribulose 5-phosphate + H(+) = (1S,2R)-1-C-(indol-3-yl)glycerol 3-phosphate + CO2 + H2O. The protein operates within amino-acid biosynthesis; L-tryptophan biosynthesis; L-tryptophan from chorismate: step 4/5. This is Indole-3-glycerol phosphate synthase from Mycolicibacterium paratuberculosis (strain ATCC BAA-968 / K-10) (Mycobacterium paratuberculosis).